The chain runs to 164 residues: Transcriptional repressor NrdR (164 aa).

Residues Cys3–Cys34 fold into a zinc finger. The ATP-cone domain maps to Leu49–Glu139.

Belongs to the NrdR family. It depends on Zn(2+) as a cofactor.

Its function is as follows. Negatively regulates transcription of bacterial ribonucleotide reductase nrd genes and operons by binding to NrdR-boxes. The chain is Transcriptional repressor NrdR from Streptococcus uberis (strain ATCC BAA-854 / 0140J).